We begin with the raw amino-acid sequence, 148 residues long: uncharacterized protein (148 aa).

The first 35 residues, 1 to 35 (MRCVTRTRNWWRRAARMPRAGSSAWWVAVCKQVCT), serve as a signal peptide directing secretion.

It localises to the secreted. This is an uncharacterized protein from Homo sapiens (Human).